We begin with the raw amino-acid sequence, 208 residues long: uncharacterized protein (208 aa).

A disordered region spans residues Lys-124 to Ala-208. Residues Thr-133–Glu-170 show a composition bias toward basic and acidic residues.

It localises to the golgi apparatus. This is an uncharacterized protein from Encephalitozoon cuniculi (strain GB-M1) (Microsporidian parasite).